A 203-amino-acid polypeptide reads, in one-letter code: Protein GrpE (203 aa).

Residues M1–N20 are compositionally biased toward polar residues. The segment at M1–K46 is disordered.

This sequence belongs to the GrpE family. In terms of assembly, homodimer.

Its subcellular location is the cytoplasm. Its function is as follows. Participates actively in the response to hyperosmotic and heat shock by preventing the aggregation of stress-denatured proteins, in association with DnaK and GrpE. It is the nucleotide exchange factor for DnaK and may function as a thermosensor. Unfolded proteins bind initially to DnaJ; upon interaction with the DnaJ-bound protein, DnaK hydrolyzes its bound ATP, resulting in the formation of a stable complex. GrpE releases ADP from DnaK; ATP binding to DnaK triggers the release of the substrate protein, thus completing the reaction cycle. Several rounds of ATP-dependent interactions between DnaJ, DnaK and GrpE are required for fully efficient folding. The protein is Protein GrpE of Ehrlichia chaffeensis (strain ATCC CRL-10679 / Arkansas).